The chain runs to 92 residues: Sec-independent protein translocase protein TatA (92 aa).

Residues 1–21 (MGIFDWKHWIVILVVVVLVFG) traverse the membrane as a helical segment. Positions 43-92 (MNDDEKPADPTVTPAQPVPPVQPQATAQANPPHTIDVQAQKVEEPIRKDV) are disordered. Residues 65 to 74 (PQATAQANPP) show a composition bias toward low complexity. Residues 83 to 92 (KVEEPIRKDV) are compositionally biased toward basic and acidic residues.

This sequence belongs to the TatA/E family. In terms of assembly, the Tat system comprises two distinct complexes: a TatABC complex, containing multiple copies of TatA, TatB and TatC subunits, and a separate TatA complex, containing only TatA subunits. Substrates initially bind to the TatABC complex, which probably triggers association of the separate TatA complex to form the active translocon.

It is found in the cell inner membrane. Its function is as follows. Part of the twin-arginine translocation (Tat) system that transports large folded proteins containing a characteristic twin-arginine motif in their signal peptide across membranes. TatA could form the protein-conducting channel of the Tat system. This is Sec-independent protein translocase protein TatA from Pseudomonas fluorescens (strain Pf0-1).